Consider the following 370-residue polypeptide: Anhydro-N-acetylmuramic acid kinase (370 aa).

13 to 20 (GTSMDGVD) lines the ATP pocket.

The protein belongs to the anhydro-N-acetylmuramic acid kinase family.

It catalyses the reaction 1,6-anhydro-N-acetyl-beta-muramate + ATP + H2O = N-acetyl-D-muramate 6-phosphate + ADP + H(+). It functions in the pathway amino-sugar metabolism; 1,6-anhydro-N-acetylmuramate degradation. It participates in cell wall biogenesis; peptidoglycan recycling. In terms of biological role, catalyzes the specific phosphorylation of 1,6-anhydro-N-acetylmuramic acid (anhMurNAc) with the simultaneous cleavage of the 1,6-anhydro ring, generating MurNAc-6-P. Is required for the utilization of anhMurNAc either imported from the medium or derived from its own cell wall murein, and thus plays a role in cell wall recycling. The polypeptide is Anhydro-N-acetylmuramic acid kinase (Vibrio vulnificus (strain CMCP6)).